We begin with the raw amino-acid sequence, 207 residues long: U1 small nuclear ribonucleoprotein C (207 aa).

Residues 4–36 (YYCDYCDTYLTHDSPSVRKQHNAGYKHKANVRI) form a Matrin-type zinc finger. 2 stretches are compositionally biased toward pro residues: residues 105–115 (PPQGYMPPPGV) and 122–131 (PGAPLPPPPQ). The disordered stretch occupies residues 105–207 (PPQGYMPPPG…PSAESPESNE (103 aa)). Residues 132–144 (NGILRPPGMAPIP) are compositionally biased toward low complexity. The span at 162–183 (GPPPNYNGLPPPPPYHTNPAAP) shows a compositional bias: pro residues. Residues 184–207 (PSGNFNNPNLNNPNPSAESPESNE) show a composition bias toward low complexity.

The protein belongs to the U1 small nuclear ribonucleoprotein C family. In terms of assembly, U1 snRNP is composed of the 7 core Sm proteins B/B', D1, D2, D3, E, F and G that assemble in a heptameric protein ring on the Sm site of the small nuclear RNA to form the core snRNP, and at least 3 U1 snRNP-specific proteins U1-70K, U1-A and U1-C. U1-C interacts with U1 snRNA and the 5' splice-site region of the pre-mRNA.

The protein localises to the nucleus. Functionally, component of the spliceosomal U1 snRNP, which is essential for recognition of the pre-mRNA 5' splice-site and the subsequent assembly of the spliceosome. U1-C is directly involved in initial 5' splice-site recognition for both constitutive and regulated alternative splicing. The interaction with the 5' splice-site seems to precede base-pairing between the pre-mRNA and the U1 snRNA. Stimulates commitment or early (E) complex formation by stabilizing the base pairing of the 5' end of the U1 snRNA and the 5' splice-site region. This is U1 small nuclear ribonucleoprotein C from Arabidopsis thaliana (Mouse-ear cress).